The chain runs to 2290 residues: Armadillo repeat-containing X-linked protein 4 (2290 aa).

Residues 7-24 (VGWVTAGLVIWAGTCYYI) form a helical membrane-spanning segment. Disordered regions lie at residues 517-549 (QGEA…TCTQ), 564-583 (SRVD…TKAD), 967-988 (KVRG…VGSA), 1014-1087 (AVPK…ACRK), 1302-1430 (GSWA…ANSG), 1521-1715 (GSWG…RSED), 1911-1931 (SNTF…AGDN), and 1954-1973 (NENT…KSSE). Basic residues predominate over residues 526-536 (GKARGKAKAKC). The segment covering 1073-1087 (TSESEGGSGTQACRK) has biased composition (polar residues). 2 stretches are compositionally biased toward gly residues: residues 1328-1341 (SWAG…GGSM) and 1403-1414 (AGAGGQAGGGSK). Over residues 1419–1430 (DQSSGRSWANSG) the composition is skewed to polar residues. Residues 1521 to 1535 (GSWGGASGQDVGGSR) show a composition bias toward gly residues. Residues 1537-1558 (GPTNQSSAGSWDSPGSQVSGSC) are compositionally biased toward polar residues. Gly residues-rich tracts occupy residues 1581–1598 (IGGG…GGSR) and 1609–1623 (GSWG…GGAR). Positions 1628–1645 (DQSSGGSWAGTGNQSSGR) are enriched in polar residues. The segment covering 1674-1687 (GAGSQASGESWAGS) has biased composition (low complexity). ARM repeat units follow at residues 2031 to 2071 (RCKH…NSAD), 2073 to 2112 (SYSH…NISV), 2153 to 2192 (ITSE…NFSK), and 2194 to 2234 (PSMT…NINY).

It belongs to the eutherian X-chromosome-specific Armcx family.

The protein localises to the membrane. The chain is Armadillo repeat-containing X-linked protein 4 (ARMCX4) from Homo sapiens (Human).